We begin with the raw amino-acid sequence, 205 residues long: Cyanate hydratase (205 aa).

Residues Arg-133, Glu-136, and Ser-159 contribute to the active site.

The protein belongs to the cyanase family.

It catalyses the reaction cyanate + hydrogencarbonate + 3 H(+) = NH4(+) + 2 CO2. Catalyzes the reaction of cyanate with bicarbonate to produce ammonia and carbon dioxide. The protein is Cyanate hydratase of Thalassiosira pseudonana (Marine diatom).